A 203-amino-acid chain; its full sequence is NADH-quinone oxidoreductase subunit C (203 aa).

The protein belongs to the complex I 30 kDa subunit family. In terms of assembly, NDH-1 is composed of 14 different subunits. Subunits NuoB, C, D, E, F, and G constitute the peripheral sector of the complex.

The protein localises to the cell inner membrane. The catalysed reaction is a quinone + NADH + 5 H(+)(in) = a quinol + NAD(+) + 4 H(+)(out). NDH-1 shuttles electrons from NADH, via FMN and iron-sulfur (Fe-S) centers, to quinones in the respiratory chain. The immediate electron acceptor for the enzyme in this species is believed to be ubiquinone. Couples the redox reaction to proton translocation (for every two electrons transferred, four hydrogen ions are translocated across the cytoplasmic membrane), and thus conserves the redox energy in a proton gradient. This is NADH-quinone oxidoreductase subunit C from Delftia acidovorans (strain DSM 14801 / SPH-1).